Here is a 131-residue protein sequence, read N- to C-terminus: Holo-[acyl-carrier-protein] synthase (131 aa).

Mg(2+) contacts are provided by D8 and E59.

It belongs to the P-Pant transferase superfamily. AcpS family. The cofactor is Mg(2+).

The protein localises to the cytoplasm. The catalysed reaction is apo-[ACP] + CoA = holo-[ACP] + adenosine 3',5'-bisphosphate + H(+). Transfers the 4'-phosphopantetheine moiety from coenzyme A to a Ser of acyl-carrier-protein. This Rickettsia felis (strain ATCC VR-1525 / URRWXCal2) (Rickettsia azadi) protein is Holo-[acyl-carrier-protein] synthase.